Reading from the N-terminus, the 734-residue chain is Photosystem I P700 chlorophyll a apoprotein A2 (734 aa).

8 helical membrane-spanning segments follow: residues 46 to 69, 135 to 158, 175 to 199, 273 to 291, 330 to 353, 369 to 395, 417 to 439, and 517 to 535; these read IFAS…FHVA, LYTG…LHLQ, LNHH…HVAI, IAHH…GHMY, IHFQ…QHMY, AALY…IFFI, AIIS…LYVH, and FLVH…LILV. Residues C559 and C568 each contribute to the [4Fe-4S] cluster site. 2 helical membrane-spanning segments follow: residues 575–596 and 643–665; these read AFYL…YWHW and LSVW…MFLI. The chlorophyll a site is built by H654, M662, and Y670. W671 contacts phylloquinone. A helical membrane pass occupies residues 707-727; the sequence is LVGLAHFSVGYIFTYAAFLIA.

This sequence belongs to the PsaA/PsaB family. In terms of assembly, the PsaA/B heterodimer binds the P700 chlorophyll special pair and subsequent electron acceptors. PSI consists of a core antenna complex that captures photons, and an electron transfer chain that converts photonic excitation into a charge separation. The eukaryotic PSI reaction center is composed of at least 11 subunits. P700 is a chlorophyll a/chlorophyll a' dimer, A0 is one or more chlorophyll a, A1 is one or both phylloquinones and FX is a shared 4Fe-4S iron-sulfur center. is required as a cofactor.

The protein localises to the plastid. Its subcellular location is the chloroplast thylakoid membrane. It carries out the reaction reduced [plastocyanin] + hnu + oxidized [2Fe-2S]-[ferredoxin] = oxidized [plastocyanin] + reduced [2Fe-2S]-[ferredoxin]. Functionally, psaA and PsaB bind P700, the primary electron donor of photosystem I (PSI), as well as the electron acceptors A0, A1 and FX. PSI is a plastocyanin-ferredoxin oxidoreductase, converting photonic excitation into a charge separation, which transfers an electron from the donor P700 chlorophyll pair to the spectroscopically characterized acceptors A0, A1, FX, FA and FB in turn. Oxidized P700 is reduced on the lumenal side of the thylakoid membrane by plastocyanin. This Dioscorea elephantipes (Elephant's foot yam) protein is Photosystem I P700 chlorophyll a apoprotein A2.